A 632-amino-acid polypeptide reads, in one-letter code: 2-hydroxyacyl-CoA lyase 2 (632 aa).

The helical transmembrane segment at 13-33 (FFPSFLLLAFGTLVAAVLGVA) threads the bilayer. Glu-98 provides a ligand contact to thiamine diphosphate. Phosphoserine is present on Ser-369. Positions 470-550 (DFVATAAYLV…VIALVGNDAG (81 aa)) are thiamine pyrophosphate binding. Positions 521 and 547 each coordinate Mg(2+).

Belongs to the TPP enzyme family. Mg(2+) is required as a cofactor. The cofactor is thiamine diphosphate.

The protein localises to the endoplasmic reticulum membrane. The catalysed reaction is 2-hydroxyoctadecanoyl-CoA = heptadecanal + formyl-CoA. It carries out the reaction (2R)-hydroxyhexadecanoyl-CoA = pentadecanal + formyl-CoA. Functionally, endoplasmic reticulum 2-OH acyl-CoA lyase involved in the cleavage (C1 removal) reaction in the fatty acid alpha-oxydation in a thiamine pyrophosphate (TPP)-dependent manner. Involved in the phytosphingosine degradation pathway. The chain is 2-hydroxyacyl-CoA lyase 2 (Ilvbl) from Mus musculus (Mouse).